The following is a 145-amino-acid chain: Peptide methionine sulfoxide reductase MsrB (145 aa).

One can recognise a MsrB domain in the interval 4-127 (SDELKQRIGE…NSAALKFIPY (124 aa)). The active-site Nucleophile is C116.

The protein belongs to the MsrB Met sulfoxide reductase family.

It carries out the reaction L-methionyl-[protein] + [thioredoxin]-disulfide + H2O = L-methionyl-(R)-S-oxide-[protein] + [thioredoxin]-dithiol. This Streptococcus pyogenes serotype M3 (strain ATCC BAA-595 / MGAS315) protein is Peptide methionine sulfoxide reductase MsrB.